A 567-amino-acid chain; its full sequence is uncharacterized protein (567 aa).

This sequence belongs to the protein kinase superfamily. ADCK protein kinase family.

This is an uncharacterized protein from Synechocystis sp. (strain ATCC 27184 / PCC 6803 / Kazusa).